A 359-amino-acid polypeptide reads, in one-letter code: ATPase ASNA1 homolog (359 aa).

Residue 23 to 30 participates in ATP binding; it reads KGGVGKTT. D63 is an active-site residue. 2 residues coordinate ATP: E252 and N279. Zn(2+) is bound by residues C291 and C294.

This sequence belongs to the arsA ATPase family. In terms of assembly, homodimer.

The protein localises to the cytoplasm. The protein resides in the endoplasmic reticulum. Functionally, ATPase required for the post-translational delivery of tail-anchored (TA) proteins to the endoplasmic reticulum. Recognizes and selectively binds the transmembrane domain of TA proteins in the cytosol. This complex then targets to the endoplasmic reticulum by membrane-bound receptors, where the tail-anchored protein is released for insertion. This process is regulated by ATP binding and hydrolysis. ATP binding drives the homodimer towards the closed dimer state, facilitating recognition of newly synthesized TA membrane proteins. ATP hydrolysis is required for insertion. Subsequently, the homodimer reverts towards the open dimer state, lowering its affinity for the membrane-bound receptor, and returning it to the cytosol to initiate a new round of targeting. The polypeptide is ATPase ASNA1 homolog (Trypanosoma cruzi (strain CL Brener)).